A 489-amino-acid polypeptide reads, in one-letter code: Alpha-amylase (489 aa).

The signal sequence occupies residues 1 to 16 (HFKPILVLCLATLALG). A disulfide bridge links C44 with C102. Positions 116, 164, and 173 each coordinate Ca(2+). C152 and C166 are oxidised to a cystine. R201 lines the chloride pocket. D203 (nucleophile) is an active-site residue. H207 is a Ca(2+) binding site. Catalysis depends on E240, which acts as the Proton donor. The chloride site is built by N303 and R339. 2 cysteine pairs are disulfide-bonded: C372-C378 and C443-C455.

Belongs to the glycosyl hydrolase 13 family. Monomer. Requires Ca(2+) as cofactor. It depends on chloride as a cofactor.

The enzyme catalyses Endohydrolysis of (1-&gt;4)-alpha-D-glucosidic linkages in polysaccharides containing three or more (1-&gt;4)-alpha-linked D-glucose units.. The protein is Alpha-amylase of Tribolium castaneum (Red flour beetle).